Consider the following 82-residue polypeptide: Small ribosomal subunit protein bS18 (82 aa).

The interval 1-25 (MKRNNMKRARMEQSRRPKKNPLKAE) is disordered.

Belongs to the bacterial ribosomal protein bS18 family. As to quaternary structure, part of the 30S ribosomal subunit. Forms a tight heterodimer with protein bS6.

Binds as a heterodimer with protein bS6 to the central domain of the 16S rRNA, where it helps stabilize the platform of the 30S subunit. The protein is Small ribosomal subunit protein bS18 of Corynebacterium urealyticum (strain ATCC 43042 / DSM 7109).